The following is a 324-amino-acid chain: MKATAKAHPIQGLVKYHGMRDTERRMPYHDSISVCTAPSHTQTTVEFRPDADEDVYVIGGEEVEGRGAERIQAVVDRVRELAGFDHRVRLESENSFPSNIGFGSSASGFAAAAMALAEAADLDMTRPEVSTIARRGSASAARAVTGAFSHLYSGMNDTDCRSERIETDLEDDLRIVAAHVPAYKETEQAHAEAADSHMFQARMAHIHAQIDDMRDALYDGDFDAAFELAEHDSLSLAATTMTGPAGWVYWQPRTIAVFNAVRKLRNEEDVPVYFSTDTGASVYINTTEEHVDRVEEAVADCGVETDVWGVGGPAEVLDESEALF.

It belongs to the phosphomevalonate decarboxylase family.

The enzyme catalyses (R)-5-phosphomevalonate + ATP = isopentenyl phosphate + ADP + phosphate + CO2. With respect to regulation, is strongly inhibited by 6-fluoromevalonate monophosphate but shows negligible inhibition by 6-fluoromevalonate diphosphate (a potent inhibitor of the classical mevalonate pathway). Functionally, catalyzes the decarboxylation of mevalonate 5-phosphate (MVAP) to isopentenyl phosphate (IP). Functions in an alternate mevalonate (MVA) pathway leading to isopentenyl diphosphate (IPP), a key precursor for the biosynthesis of isoprenoid compounds such as archaeal membrane lipids. The protein is Phosphomevalonate decarboxylase (mvaD) of Haloferax volcanii (strain ATCC 29605 / DSM 3757 / JCM 8879 / NBRC 14742 / NCIMB 2012 / VKM B-1768 / DS2) (Halobacterium volcanii).